The primary structure comprises 421 residues: Imidazolonepropionase (421 aa).

Fe(3+) contacts are provided by H81 and H83. The Zn(2+) site is built by H81 and H83. R90, Y153, and H186 together coordinate 4-imidazolone-5-propanoate. Y153 provides a ligand contact to N-formimidoyl-L-glutamate. Position 251 (H251) interacts with Fe(3+). Residue H251 participates in Zn(2+) binding. E254 is a 4-imidazolone-5-propanoate binding site. D326 lines the Fe(3+) pocket. D326 serves as a coordination point for Zn(2+). 2 residues coordinate N-formimidoyl-L-glutamate: N328 and G330. S331 is a 4-imidazolone-5-propanoate binding site.

The protein belongs to the metallo-dependent hydrolases superfamily. HutI family. Requires Zn(2+) as cofactor. The cofactor is Fe(3+).

It is found in the cytoplasm. It catalyses the reaction 4-imidazolone-5-propanoate + H2O = N-formimidoyl-L-glutamate. Its pathway is amino-acid degradation; L-histidine degradation into L-glutamate; N-formimidoyl-L-glutamate from L-histidine: step 3/3. Catalyzes the hydrolytic cleavage of the carbon-nitrogen bond in imidazolone-5-propanoate to yield N-formimidoyl-L-glutamate. It is the third step in the universal histidine degradation pathway. This chain is Imidazolonepropionase, found in Streptococcus pyogenes serotype M2 (strain MGAS10270).